Here is a 530-residue protein sequence, read N- to C-terminus: Bifunctional purine biosynthesis protein PurH (530 aa).

An MGS-like domain is found at 1 to 148; sequence MNNARPIRRA…KNHKDVTIVV (148 aa).

Belongs to the PurH family.

The catalysed reaction is (6R)-10-formyltetrahydrofolate + 5-amino-1-(5-phospho-beta-D-ribosyl)imidazole-4-carboxamide = 5-formamido-1-(5-phospho-D-ribosyl)imidazole-4-carboxamide + (6S)-5,6,7,8-tetrahydrofolate. It carries out the reaction IMP + H2O = 5-formamido-1-(5-phospho-D-ribosyl)imidazole-4-carboxamide. Its pathway is purine metabolism; IMP biosynthesis via de novo pathway; 5-formamido-1-(5-phospho-D-ribosyl)imidazole-4-carboxamide from 5-amino-1-(5-phospho-D-ribosyl)imidazole-4-carboxamide (10-formyl THF route): step 1/1. The protein operates within purine metabolism; IMP biosynthesis via de novo pathway; IMP from 5-formamido-1-(5-phospho-D-ribosyl)imidazole-4-carboxamide: step 1/1. The polypeptide is Bifunctional purine biosynthesis protein PurH (Aliivibrio fischeri (strain ATCC 700601 / ES114) (Vibrio fischeri)).